Here is a 91-residue protein sequence, read N- to C-terminus: Acylphosphatase (91 aa).

The Acylphosphatase-like domain occupies 6–91 (CMRCYISGRV…WKDYISFDVL (86 aa)). Active-site residues include Arg21 and Asn39.

This sequence belongs to the acylphosphatase family.

It carries out the reaction an acyl phosphate + H2O = a carboxylate + phosphate + H(+). The protein is Acylphosphatase (acyP) of Legionella pneumophila (strain Paris).